Consider the following 462-residue polypeptide: MGCIVCSDGIVCRLKFLPFAAGANRLAGGFLKISEVLVKVGDGVHTLLLDRPIVRDGRKFDAPLLWMVVLMTAFGLLMIYSASVYLASKEGGDQFFYLTRQAGFVVAGLIASGFLWFLCRMRTWRRLVPWIFALSGLLLVAVLIAGREINGATRWIPLGPLNFQPTELFKLAVILYLASLFTRREEVLRSMESLGWQSIWRGTANLIMSATNPQARRETLEMYGRFRAIILPIMLVAFGLVLIMVQPDFGSFVVITVITVGMLFLAGLPWKYFFVLVGSVLGGMVLMITAAPYRVQRVVAFLDPWKDPQGAGYQLTHSLMAIGRGEWFGMGLGASLSKRGFLPEAHTDFIFAIIAEEFGFFGMCVLIFCYGWLVVRAFSIGKQSRDLGLTFNAYIASGIGIWIGIQSFFNIGVNIGALPTKGLTLPLMSYGGSSVFFMLISMMLLLRIDYENRRKMRGYRVE.

The Cytoplasmic segment spans residues 1–63 (MGCIVCSDGI…VRDGRKFDAP (63 aa)). Residues 64–84 (LLWMVVLMTAFGLLMIYSASV) form a helical membrane-spanning segment. At 85 to 97 (YLASKEGGDQFFY) the chain is on the periplasmic side. The helical transmembrane segment at 98-118 (LTRQAGFVVAGLIASGFLWFL) threads the bilayer. At 119 to 125 (CRMRTWR) the chain is on the cytoplasmic side. The helical transmembrane segment at 126–146 (RLVPWIFALSGLLLVAVLIAG) threads the bilayer. The Periplasmic portion of the chain corresponds to 147–160 (REINGATRWIPLGP). Residues 161 to 181 (LNFQPTELFKLAVILYLASLF) form a helical membrane-spanning segment. Residues 182-227 (TRREEVLRSMESLGWQSIWRGTANLIMSATNPQARRETLEMYGRFR) lie on the Cytoplasmic side of the membrane. The next 2 helical transmembrane spans lie at 228–248 (AIIL…VQPD) and 249–269 (FGSF…AGLP). At 270–271 (WK) the chain is on the cytoplasmic side. A helical transmembrane segment spans residues 272-292 (YFFVLVGSVLGGMVLMITAAP). Residues 293-348 (YRVQRVVAFLDPWKDPQGAGYQLTHSLMAIGRGEWFGMGLGASLSKRGFLPEAHTD) are Periplasmic-facing. The chain crosses the membrane as a helical span at residues 349–369 (FIFAIIAEEFGFFGMCVLIFC). Over 370 to 386 (YGWLVVRAFSIGKQSRD) the chain is Cytoplasmic. A helical membrane pass occupies residues 387-409 (LGLTFNAYIASGIGIWIGIQSFF). Over 410-424 (NIGVNIGALPTKGLT) the chain is Periplasmic. Residues 425–445 (LPLMSYGGSSVFFMLISMMLL) traverse the membrane as a helical segment. Residues 446–462 (LRIDYENRRKMRGYRVE) lie on the Cytoplasmic side of the membrane.

This sequence belongs to the SEDS family. FtsW subfamily.

It is found in the cell inner membrane. It carries out the reaction [GlcNAc-(1-&gt;4)-Mur2Ac(oyl-L-Ala-gamma-D-Glu-L-Lys-D-Ala-D-Ala)](n)-di-trans,octa-cis-undecaprenyl diphosphate + beta-D-GlcNAc-(1-&gt;4)-Mur2Ac(oyl-L-Ala-gamma-D-Glu-L-Lys-D-Ala-D-Ala)-di-trans,octa-cis-undecaprenyl diphosphate = [GlcNAc-(1-&gt;4)-Mur2Ac(oyl-L-Ala-gamma-D-Glu-L-Lys-D-Ala-D-Ala)](n+1)-di-trans,octa-cis-undecaprenyl diphosphate + di-trans,octa-cis-undecaprenyl diphosphate + H(+). It participates in cell wall biogenesis; peptidoglycan biosynthesis. Functionally, peptidoglycan polymerase that is essential for cell division. In Neisseria gonorrhoeae (strain NCCP11945), this protein is Probable peptidoglycan glycosyltransferase FtsW.